A 445-amino-acid polypeptide reads, in one-letter code: Aminopeptidase C (445 aa).

Catalysis depends on residues Cys-69, His-363, and Asn-385.

The protein belongs to the peptidase C1 family. In terms of assembly, homohexamer.

The catalysed reaction is Inactivates bleomycin B2 (a cytotoxic glycometallopeptide) by hydrolysis of a carboxyamide bond of beta-aminoalanine, but also shows general aminopeptidase activity. The specificity varies somewhat with source, but amino acid arylamides of Met, Leu and Ala are preferred.. This Streptococcus thermophilus protein is Aminopeptidase C (pepC).